The primary structure comprises 283 residues: Acetyl-coenzyme A carboxylase carboxyl transferase subunit beta (283 aa).

Residues 23 to 283 (LWIKCPSCSE…DFLMAGKAAA (261 aa)) enclose the CoA carboxyltransferase N-terminal domain. 4 residues coordinate Zn(2+): Cys-27, Cys-30, Cys-46, and Cys-49. The C4-type zinc-finger motif lies at 27 to 49 (CPSCSEMLFTKEYEDNLSVCPHC).

It belongs to the AccD/PCCB family. As to quaternary structure, acetyl-CoA carboxylase is a heterohexamer composed of biotin carboxyl carrier protein (AccB), biotin carboxylase (AccC) and two subunits each of ACCase subunit alpha (AccA) and ACCase subunit beta (AccD). Requires Zn(2+) as cofactor.

It localises to the cytoplasm. It catalyses the reaction N(6)-carboxybiotinyl-L-lysyl-[protein] + acetyl-CoA = N(6)-biotinyl-L-lysyl-[protein] + malonyl-CoA. The protein operates within lipid metabolism; malonyl-CoA biosynthesis; malonyl-CoA from acetyl-CoA: step 1/1. In terms of biological role, component of the acetyl coenzyme A carboxylase (ACC) complex. Biotin carboxylase (BC) catalyzes the carboxylation of biotin on its carrier protein (BCCP) and then the CO(2) group is transferred by the transcarboxylase to acetyl-CoA to form malonyl-CoA. This Novosphingobium aromaticivorans (strain ATCC 700278 / DSM 12444 / CCUG 56034 / CIP 105152 / NBRC 16084 / F199) protein is Acetyl-coenzyme A carboxylase carboxyl transferase subunit beta.